The chain runs to 303 residues: GMP synthase [glutamine-hydrolyzing] subunit B (303 aa).

Positions 1-183 (MDVEKFVENA…LGLPKEISER (183 aa)) constitute a GMPS ATP-PPase domain. Position 28–34 (28–34 (SGGVDSS)) interacts with ATP.

As to quaternary structure, heterodimer composed of a glutamine amidotransferase subunit (A) and a GMP-binding subunit (B).

It carries out the reaction XMP + L-glutamine + ATP + H2O = GMP + L-glutamate + AMP + diphosphate + 2 H(+). It functions in the pathway purine metabolism; GMP biosynthesis; GMP from XMP (L-Gln route): step 1/1. In terms of biological role, catalyzes the synthesis of GMP from XMP. The polypeptide is GMP synthase [glutamine-hydrolyzing] subunit B (guaAB) (Archaeoglobus fulgidus (strain ATCC 49558 / DSM 4304 / JCM 9628 / NBRC 100126 / VC-16)).